The following is a 257-amino-acid chain: Transmembrane protein 101 (257 aa).

8 helical membrane-spanning segments follow: residues 24-40, 52-72, 77-97, 110-130, 139-159, 182-202, 206-226, and 233-253; these read TRCP…LYAE, VPYL…MSFG, WFAL…YIGG, YSRT…AGEL, SLQS…AYSL, LFFV…YVTL, ILAV…SYWH, and FWNQ…AVIL.

The protein resides in the membrane. In terms of biological role, may activate NF-kappa-B signaling pathways. The protein is Transmembrane protein 101 (Tmem101) of Mus musculus (Mouse).